Here is a 1061-residue protein sequence, read N- to C-terminus: NACHT, LRR and PYD domains-containing protein 12 (1061 aa).

Positions 1-95 (MLRTAGRDGL…WERGQREDLV (95 aa)) constitute a Pyrin domain. One can recognise an FISNA domain in the interval 129–201 (YRDYVRRKFR…SPIKIETLFE (73 aa)). Residues 211 to 528 (RTVVMQGAAG…EFFAAMYYIL (318 aa)) enclose the NACHT domain. 217 to 224 (GAAGIGKS) serves as a coordination point for ATP. 8 LRR repeats span residues 828–848 (HLVE…RLLC), 857–878 (RLRT…ELAS), 885–906 (SLRE…LLCE), 914–935 (KLQT…GLSV), 942–962 (NLRE…WLLA), 971–992 (RLQK…NLYF), 999–1020 (TLTD…LLCK), and 1028–1049 (KLRV…RLAA).

It belongs to the NLRP family. As to quaternary structure, interacts (via pyrin domain) with ASC. Interacts (via pyrin domain) with FAF1 (via UBA domain). Interacts with MAP3K14; this interaction promotes proteasomal degradation of MAP3K14. Interacts with NOD2; this interaction promotes degradation of NOD2 through the ubiquitin-proteasome pathway. Interacts with HSPA1A and HSPA8. Interacts with HSP90AA1. Interacts with TRIM25; this interaction inhibits RIGI-mediated signaling pathway. Detected only in peripheral blood leukocytes, predominantly in eosinophils and granulocytes, and at lower levels in monocytes.

Its subcellular location is the cytoplasm. Its function is as follows. Plays an essential role as an potent mitigator of inflammation. Primarily expressed in dendritic cells and macrophages, inhibits both canonical and non-canonical NF-kappa-B and ERK activation pathways. Functions as a negative regulator of NOD2 by targeting it to degradation via the proteasome pathway. In turn, promotes bacterial tolerance. Also inhibits the RIGI-mediated immune signaling against RNA viruses by reducing the E3 ubiquitin ligase TRIM25-mediated 'Lys-63'-linked RIGI activation but enhancing the E3 ubiquitin ligase RNF125-mediated 'Lys-48'-linked RIGI degradation. Also acts as a negative regulator of inflammatory response to mitigate obesity and obesity-associated diseases in adipose tissue. In Homo sapiens (Human), this protein is NACHT, LRR and PYD domains-containing protein 12 (NLRP12).